Reading from the N-terminus, the 64-residue chain is Basic secretory protease (64 aa).

The cofactor is a divalent metal cation. Post-translationally, glycosylated.

Its activity is regulated as follows. Inhibited by EDTA. In terms of biological role, metalloprotease, digests gelatin and azocasein (in vitro). The sequence is that of Basic secretory protease from Boswellia serrata (Indian frankincense).